We begin with the raw amino-acid sequence, 137 residues long: Acidic phospholipase A2 PL-I (137 aa).

The signal sequence occupies residues 1–17; sequence AVCVSLLGASSIRPLPL. 7 disulfide bridges follow: cysteine 28/cysteine 89, cysteine 44/cysteine 136, cysteine 46/cysteine 62, cysteine 61/cysteine 117, cysteine 68/cysteine 110, cysteine 78/cysteine 103, and cysteine 96/cysteine 108. Residues tyrosine 45, glycine 47, and glycine 49 each contribute to the Ca(2+) site. Histidine 65 is a catalytic residue. Aspartate 66 serves as a coordination point for Ca(2+). The active site involves aspartate 111.

The cofactor is Ca(2+). Expressed by the venom gland.

It is found in the secreted. It catalyses the reaction a 1,2-diacyl-sn-glycero-3-phosphocholine + H2O = a 1-acyl-sn-glycero-3-phosphocholine + a fatty acid + H(+). Its function is as follows. Snake venom phospholipase A2 (PLA2) that may act in the hemostasis system of the prey. Exhibits hydrolytic activities, and prefers the anionic micelles (dPPC with deoxycholate) (793 umol/mg/min) to the zwitterionic micelles (dPPC with Triton X-100) (591 umol/mg/min). PLA2 catalyzes the calcium-dependent hydrolysis of the 2-acyl groups in 3-sn-phosphoglycerides. This is Acidic phospholipase A2 PL-I from Walterinnesia aegyptia (Desert black snake).